The chain runs to 150 residues: 16.9 kDa class I heat shock protein 1 (150 aa).

The important for thermostability under elevated temperature stretch occupies residues 1–42 (MSLVRRSNVFDPFSLDLWDPFDSVFRSVVPATSDNDTAAFAN). The sHSP domain maps to 36 to 150 (DTAAFANARI…PEVKAIEISG (115 aa)).

Belongs to the small heat shock protein (HSP20) family. In terms of assembly, forms oligomeric structures.

It localises to the cytoplasm. In Oryza sativa subsp. japonica (Rice), this protein is 16.9 kDa class I heat shock protein 1 (HSP16.9A).